Here is a 304-residue protein sequence, read N- to C-terminus: Probable aspartoacylase (304 aa).

Zn(2+) is bound by residues H13 and E16. Residues R55 and 62 to 63 (NR) contribute to the substrate site. H104 lines the Zn(2+) pocket. Residues E162 and Y272 each contribute to the substrate site.

This sequence belongs to the AspA/AstE family. Aspartoacylase subfamily. It depends on Zn(2+) as a cofactor.

The catalysed reaction is an N-acyl-L-aspartate + H2O = a carboxylate + L-aspartate. The protein is Probable aspartoacylase of Synechococcus sp. (strain CC9605).